A 590-amino-acid chain; its full sequence is MSDLEDEIKVLRRKVQDGEEALQRAGQYGLQLLDEKMELHNRLEEQRTEMSNVIEALEQDKYTLQREVELKIRMLESLRSEFDLVRTQQKHQMEQQQTLLERNHAVEISDLKNKVVKMKTDLEEAQLAEKQMRHKLDQQAEALNSKTEELRALTERAHETMSSEILELQVQKMELESAMATLEQELQEAQYKDEQLHLANTTLQRQLERLTEEKEEREKEAVSCYNALEKAREANQDLQIQLEQVLQQAQDPNSKGNSLFSEVEDKRAAMERQLNSMKRNYDSLQKQHVLTKQHMHHMKMQIATLMQLQGNRADPAQLERLQFMLSDKNKEIESLMMKVRELEKEKMAVKDHHPHPPSNEGELKDETYYTDLLKMQLANSKKDAEKLKEELSMARMKALSESQRVLELERKLYGTEQALKLRHSDNMKLQVKLEELKIKYTPNEVNKAQVQKRRREKFPVPEENSASVKDETTTQDTELSKNSNEKAEEKTPSHPVEKPVVIPLQSEHPTEPNPVLSRESKSVRICEDPPVCIPDAPRSPVNDSNSKNVDQTHQSSEEEENWRTEKKRKKYQQPTHVSSQKTMANECAQQ.

Positions 1-401 (MSDLEDEIKV…SMARMKALSE (401 aa)) form a coiled coil. The interval 446 to 590 (NKAQVQKRRR…KTMANECAQQ (145 aa)) is disordered. Composition is skewed to basic and acidic residues over residues 483–497 (SNEKAEEKTPSHPVE) and 518–527 (RESKSVRICE). Polar residues-rich tracts occupy residues 541-554 (VNDSNSKNVDQTHQ) and 572-590 (QQPTHVSSQKTMANECAQQ).

The protein belongs to the Spindly family.

The protein localises to the chromosome. The protein resides in the centromere. It is found in the kinetochore. Functionally, required for the localization of dynein and dynactin to the mitotic kintochore. Dynein is believed to control the initial lateral interaction between the kinetochore and spindle microtubules and to facilitate the subsequent formation of end-on kinetochore-microtubule attachments mediated by the NDC80 complex. May act as an adapter protein linking the dynein motor complex to various cargos. In Danio rerio (Zebrafish), this protein is Protein Spindly (spdl1).